A 389-amino-acid chain; its full sequence is Cellobiose 2-epimerase (389 aa).

The protein belongs to the cellobiose 2-epimerase family. Monomer.

It carries out the reaction D-cellobiose = beta-D-glucosyl-(1-&gt;4)-D-mannopyranose. In terms of biological role, catalyzes the reversible epimerization of cellobiose to 4-O-beta-D-glucopyranosyl-D-mannose (Glc-Man). Catalyzes epimerization but also isomerization for beta-1,4- and alpha-1,4-gluco-oligosaccharides. Can use cellobiose, lactose, cellotriose, maltose and maltotriose. This Dictyoglomus turgidum (strain DSM 6724 / Z-1310) protein is Cellobiose 2-epimerase.